The chain runs to 289 residues: Secretory carrier-associated membrane protein (289 aa).

A disordered region spans residues 1–65; the sequence is MAGRYDPNPF…TSTDGKKKER (65 aa). Residues 1-123 are Cytoplasmic-facing; the sequence is MAGRYDPNPF…EIPIHLRTLQ (123 aa). Positions 16-31 are enriched in polar residues; it reads NPFSNPRSAASATNSR. The stretch at 59–98 forms a coiled coil; sequence DGKKKERDLQAKEAELRKREQEVRRKEEAIARAGIVIEEK. The next 4 helical transmembrane spans lie at 124–144, 156–176, 191–211, and 239–259; these read YVAF…VVSV, IWFL…ALWY, FGWF…AAVA, and IFYF…IWVI. Topologically, residues 260 to 289 are cytoplasmic; sequence QQVYMHFRGGGKTAEMKREAALGAMGAALR.

The protein belongs to the SCAMP family.

It localises to the cell membrane. The protein localises to the cytoplasmic vesicle. The protein resides in the secretory vesicle membrane. In terms of biological role, probably involved in membrane trafficking. This is Secretory carrier-associated membrane protein (PSAM2) from Pisum sativum (Garden pea).